The following is a 463-amino-acid chain: Eukaryotic translation initiation factor 3 subunit E (463 aa).

One can recognise a PCI domain in the interval 224 to 407 (FNLGENQGCQ…NMLHITRPHA (184 aa)). Positions 432–463 (QSSVGEPRERGERGERGNKGGRGRPRTQEVAA) are disordered. Over residues 437 to 449 (EPRERGERGERGN) the composition is skewed to basic and acidic residues.

The protein belongs to the eIF-3 subunit E family. In terms of assembly, component of the eukaryotic translation initiation factor 3 (eIF-3) complex.

It is found in the cytoplasm. Its function is as follows. Component of the eukaryotic translation initiation factor 3 (eIF-3) complex, which is involved in protein synthesis of a specialized repertoire of mRNAs and, together with other initiation factors, stimulates binding of mRNA and methionyl-tRNAi to the 40S ribosome. The eIF-3 complex specifically targets and initiates translation of a subset of mRNAs involved in cell proliferation. The protein is Eukaryotic translation initiation factor 3 subunit E of Cryptococcus neoformans var. neoformans serotype D (strain JEC21 / ATCC MYA-565) (Filobasidiella neoformans).